A 448-amino-acid polypeptide reads, in one-letter code: Probable ribonuclease FAU-1 (448 aa).

It belongs to the FAU-1 family.

Its function is as follows. Probable RNase involved in rRNA stability through maturation and/or degradation of precursor rRNAs. Binds to RNA in loop regions with AU-rich sequences. The polypeptide is Probable ribonuclease FAU-1 (Pyrobaculum calidifontis (strain DSM 21063 / JCM 11548 / VA1)).